The sequence spans 195 residues: dTTP/UTP pyrophosphatase (195 aa).

The active-site Proton acceptor is Asp-70.

This sequence belongs to the Maf family. YhdE subfamily. The cofactor is a divalent metal cation.

The protein localises to the cytoplasm. It catalyses the reaction dTTP + H2O = dTMP + diphosphate + H(+). The catalysed reaction is UTP + H2O = UMP + diphosphate + H(+). Its function is as follows. Nucleoside triphosphate pyrophosphatase that hydrolyzes dTTP and UTP. May have a dual role in cell division arrest and in preventing the incorporation of modified nucleotides into cellular nucleic acids. The sequence is that of dTTP/UTP pyrophosphatase from Photorhabdus laumondii subsp. laumondii (strain DSM 15139 / CIP 105565 / TT01) (Photorhabdus luminescens subsp. laumondii).